We begin with the raw amino-acid sequence, 217 residues long: Methylthioribulose-1-phosphate dehydratase (217 aa).

2 residues coordinate Zn(2+): His-106 and His-108.

Belongs to the aldolase class II family. MtnB subfamily. The cofactor is Zn(2+).

It catalyses the reaction 5-(methylsulfanyl)-D-ribulose 1-phosphate = 5-methylsulfanyl-2,3-dioxopentyl phosphate + H2O. It functions in the pathway amino-acid biosynthesis; L-methionine biosynthesis via salvage pathway; L-methionine from S-methyl-5-thio-alpha-D-ribose 1-phosphate: step 2/6. Functionally, catalyzes the dehydration of methylthioribulose-1-phosphate (MTRu-1-P) into 2,3-diketo-5-methylthiopentyl-1-phosphate (DK-MTP-1-P). In Xanthomonas campestris pv. campestris (strain 8004), this protein is Methylthioribulose-1-phosphate dehydratase.